The following is a 312-amino-acid chain: Bifunctional pinoresinol-lariciresinol reductase 1 (312 aa).

NADP(+) is bound by residues 10-16 (GGTGYIG), R35, and K44. K136 serves as the catalytic Proton acceptor. Residue R140 participates in NADP(+) binding. H268 lines the substrate pocket.

This sequence belongs to the NmrA-type oxidoreductase family. Isoflavone reductase subfamily. As to quaternary structure, dimer. Expressed in seeds and roots, but not in stems. Detected in leaves.

It carries out the reaction (-)-lariciresinol + NADP(+) = (-)-pinoresinol + NADPH + H(+). It catalyses the reaction (+)-secoisolariciresinol + NADP(+) = (-)-lariciresinol + NADPH + H(+). Reductase involved in lignan biosynthesis. Catalyzes the enantioselective conversion of (-)-pinoresinol into (-)-lariciresinol and of (-)-lariciresinol into (+)-secoisolariciresinol. Abstracts the 4R-hydride from the NADPH cofactor during catalysis. This is Bifunctional pinoresinol-lariciresinol reductase 1 (PLR_Lu1) from Linum usitatissimum (Flax).